We begin with the raw amino-acid sequence, 228 residues long: Methyltransferase verB (228 aa).

It belongs to the methyltransferase superfamily.

It functions in the pathway secondary metabolite biosynthesis; terpenoid biosynthesis. It participates in mycotoxin biosynthesis. Functionally, methyltransferase; part of the gene cluster that mediates the biosynthesis of the neurotoxin verrucosidin, a methylated alpha-pyrone polyketide that inhibits oxidative phosphorylation in mitochondria and thereby causes neurological diseases. The carbon backbone of verrucosidin is synthesized by the HR-PKS verA, and further modified by the other verrucodidin cluster enzymes. This chain is Methyltransferase verB, found in Penicillium polonicum.